A 384-amino-acid polypeptide reads, in one-letter code: G protein-coupled receptor 88 (384 aa).

Topologically, residues 1-35 (MTNSSSTSTSSTTGGSLLLLCEEEESWAGRRIPVS) are extracellular. A glycan (N-linked (GlcNAc...) asparagine) is linked at N3. A helical transmembrane segment spans residues 36-56 (LLYSGLAIGGTLANGMVIYLV). The Cytoplasmic portion of the chain corresponds to 57–73 (SSFRKLQTTSNAFIVNG). The chain crosses the membrane as a helical span at residues 74-94 (CAADLSVCALWMPQEAVLGLL). Over 95 to 116 (PTGSAEPPADWDGAGGSYRLLR) the chain is Extracellular. The chain crosses the membrane as a helical span at residues 117-136 (GGLLGLGLTVSLLSHCLVAL). The Cytoplasmic segment spans residues 137–158 (NRYLLITRAPATYQALYQRRHT). A helical transmembrane segment spans residues 159 to 179 (AGMLALSWALALGLVLLLPPW). The Extracellular segment spans residues 180-195 (APRPGAAPPRVHYPAL). A helical membrane pass occupies residues 196-216 (LAAAALLAQTALLLHCYLGIV). Residues 217-285 (RRVRVSVKRV…RAQRRLSGLS (69 aa)) are Cytoplasmic-facing. Residues 286-306 (VLLLCCVFLLATQPLVWVSLA) traverse the membrane as a helical segment. The Extracellular portion of the chain corresponds to 307-310 (SGFS). The helical transmembrane segment at 311–331 (LPVPWGVQAASWLLCCALSAL) threads the bilayer. At 332–384 (NPLLYTWRNEEFRRSVRSVLPGVGDAAAAAVAATAVPAVSQAQLGTRAAGQHW) the chain is on the cytoplasmic side.

The protein belongs to the G-protein coupled receptor 1 family. As to expression, expressed predominantly in the striatum.

The protein localises to the cell membrane. Its subcellular location is the cell projection. It is found in the cilium membrane. It localises to the cytoplasm. The protein resides in the nucleus. In terms of biological role, orphan G protein-coupled receptor implicated in a large repertoire of behavioral responses that engage motor activities, spatial learning, and emotional processing. May play a role in the regulation of cognitive and motor function. Couples with the heterotrimeric G protein complex of the G(i) subfamily, consisting of GNAI1, GNB1 and GNG2, thereby acting through a G(i)-mediated pathway. Plays a role in the attenuation of D1 dopamine receptor (D1R)-mediated cAMP response in ciliated cells. In non-ciliated cells, involved in the inhibition of the beta-2 adrenergic receptor (B2AR) response. This Homo sapiens (Human) protein is G protein-coupled receptor 88 (GPR88).